The chain runs to 847 residues: Putative membrane protein SCO5905 (847 aa).

12 helical membrane-spanning segments follow: residues 18–38, 187–207, 215–235, 248–268, 302–322, 326–346, 381–401, 539–559, 562–582, 600–620, 643–663, and 672–692; these read AVVV…APAL, GGDK…LLAI, LVPL…GAIL, ASIM…IITA, IVLA…GFGP, LGVA…VLLL, VKVA…LLGY, DTTL…VLLL, LLAP…TLGA, VTAY…IFIM, TGGV…VLMT, and FGFA…PLLV. Positions 708 to 729 are disordered; the sequence is RPGTPQTPSTPTSEPPSADAPA. Transmembrane regions (helical) follow at residues 744-764, 778-798, and 808-828; these read FTWI…GMYL, FGTL…LVAI, and TIFA…EIWA.

It belongs to the resistance-nodulation-cell division (RND) (TC 2.A.6) family. MmpL subfamily.

It is found in the cell membrane. This Streptomyces coelicolor (strain ATCC BAA-471 / A3(2) / M145) protein is Putative membrane protein SCO5905.